Here is an 802-residue protein sequence, read N- to C-terminus: Aldehyde dehydrogenase family 16 member A1 (802 aa).

Positions 513-554 (SLPSGPETGPSPAPPYGLFVRGRFQSPGTQSSRPIKDSSGKV) are disordered.

This sequence belongs to the aldehyde dehydrogenase family. Interacts with SPG21.

This is Aldehyde dehydrogenase family 16 member A1 (Aldh16a1) from Rattus norvegicus (Rat).